Consider the following 629-residue polypeptide: MKSNYDVIVVGGGHAGVEAALASARLNKKTALINLYEDKIATMPCNPSVGGPAKGIVVREIDALGGEMAKAADATALQTKLLNSSRGPGVWALRVQSDKEEYSKYMRNVIKNQKNLDLITRACTGLVYDENKTVTGIYLDDQTILNAKAVIITTGTYLKSEILKGVDRYESGPNNEKTTKGISQSLIDLGIKLMRFKTGTPARVYRDSVDLSNAVLEPGTDMKLAFSFSTSTYTPIEKQQPCYLIHSTLETKKIIEDNLEKSAMYSGTVKSIGPRYCPSFEDKAVRFREKDTHQIFIEPETLNGDTWYVQGFSTSMPIEVQEMMLKSLPGFENVRVKHWAYAIEYDCIDPMQLSPSLELKDVKNLFTAGQINGTSGYEEAAGQGLIAGINASRKIDGLDPIILRRDEAYIGVMIDDLINKGVWEPYRLLTSRAEHRLLLRNDNAETRLKQYGKEIGLISDQEWNQYLIYVKEIEQAIKELKEIRFTPKSQLAINLKNKNQADLSHGYSGYEIIKIPTVDINELIEFIPSLQKLKTNQLQSIVIEIRFEGYVKKERQLVDKLVKLERKKIPLDINYSKVDNLATEAKDKLEKIRPLNIGQASRITGVNPADIQMLLFYLKKQYPLENIDN.

11–16 (GGGHAG) provides a ligand contact to FAD. Position 273 to 287 (273 to 287 (GPRYCPSFEDKAVRF)) interacts with NAD(+).

Belongs to the MnmG family. As to quaternary structure, homodimer. Heterotetramer of two MnmE and two MnmG subunits. It depends on FAD as a cofactor.

The protein localises to the cytoplasm. NAD-binding protein involved in the addition of a carboxymethylaminomethyl (cmnm) group at the wobble position (U34) of certain tRNAs, forming tRNA-cmnm(5)s(2)U34. The sequence is that of tRNA uridine 5-carboxymethylaminomethyl modification enzyme MnmG from Mycoplasma mycoides subsp. mycoides SC (strain CCUG 32753 / NCTC 10114 / PG1).